The sequence spans 184 residues: Type-1 fimbrial protein, A chain (184 aa).

The signal sequence occupies residues 1–23 (MKIKTLAIVVLSALSLSSTAALA). Cysteines 46 and 86 form a disulfide.

It belongs to the fimbrial protein family.

It localises to the fimbrium. Fimbriae (also called pili), polar filaments radiating from the surface of the bacterium to a length of 0.5-1.5 micrometers and numbering 100-300 per cell, enable bacteria to colonize the epithelium of specific host organs. In Escherichia coli, this protein is Type-1 fimbrial protein, A chain.